The chain runs to 165 residues: C-phycoerythrin class 2 subunit alpha (165 aa).

Cys75 serves as a coordination point for phycourobilin. The (2R,3E)-phycoerythrobilin site is built by Cys83 and Cys140.

Belongs to the phycobiliprotein family. In terms of assembly, heterodimer of an alpha and a beta chain. Post-translationally, contains two covalently linked phycoerythrobilin chromophores and one covalently linked phycourobilin chromophore.

The protein localises to the cellular thylakoid membrane. Its function is as follows. Light-harvesting photosynthetic bile pigment-protein from the phycobiliprotein complex. The chain is C-phycoerythrin class 2 subunit alpha (mpeA) from Synechococcus sp. (strain WH8020).